Consider the following 378-residue polypeptide: Succinyl-diaminopimelate desuccinylase (378 aa).

A Zn(2+)-binding site is contributed by His68. Asp70 is a catalytic residue. Asp101 provides a ligand contact to Zn(2+). Glu135 serves as the catalytic Proton acceptor. 3 residues coordinate Zn(2+): Glu136, Glu164, and His350.

It belongs to the peptidase M20A family. DapE subfamily. Homodimer. Zn(2+) serves as cofactor. It depends on Co(2+) as a cofactor.

The enzyme catalyses N-succinyl-(2S,6S)-2,6-diaminopimelate + H2O = (2S,6S)-2,6-diaminopimelate + succinate. The protein operates within amino-acid biosynthesis; L-lysine biosynthesis via DAP pathway; LL-2,6-diaminopimelate from (S)-tetrahydrodipicolinate (succinylase route): step 3/3. Its function is as follows. Catalyzes the hydrolysis of N-succinyl-L,L-diaminopimelic acid (SDAP), forming succinate and LL-2,6-diaminopimelate (DAP), an intermediate involved in the bacterial biosynthesis of lysine and meso-diaminopimelic acid, an essential component of bacterial cell walls. The chain is Succinyl-diaminopimelate desuccinylase from Vibrio parahaemolyticus serotype O3:K6 (strain RIMD 2210633).